The following is a 462-amino-acid chain: Nitrogenase iron-iron protein beta chain (462 aa).

Residues C20, C45, C104, and S143 each contribute to the [8Fe-7S] cluster site.

It belongs to the NifD/NifK/NifE/NifN family. Hexamer of two alpha, two beta, and two delta chains. Requires [8Fe-7S] cluster as cofactor.

The enzyme catalyses N2 + 8 reduced [2Fe-2S]-[ferredoxin] + 16 ATP + 16 H2O = H2 + 8 oxidized [2Fe-2S]-[ferredoxin] + 2 NH4(+) + 16 ADP + 16 phosphate + 6 H(+). This iron-iron protein is part of the nitrogenase complex that catalyzes the key enzymatic reactions in nitrogen fixation. Other nitrogenase complexes utilize a molybdenum-iron protein or a vanadium-iron protein. The polypeptide is Nitrogenase iron-iron protein beta chain (anfK) (Azotobacter vinelandii).